Reading from the N-terminus, the 279-residue chain is Energy-coupling factor transporter ATP-binding protein EcfA1 (279 aa).

Positions 5–240 (IELKKVTFNY…GDELLQLGLD (236 aa)) constitute an ABC transporter domain. Position 40 to 47 (40 to 47 (GHNGSGKS)) interacts with ATP.

This sequence belongs to the ABC transporter superfamily. Energy-coupling factor EcfA family. Forms a stable energy-coupling factor (ECF) transporter complex composed of 2 membrane-embedded substrate-binding proteins (S component), 2 ATP-binding proteins (A component) and 2 transmembrane proteins (T component).

It localises to the cell membrane. ATP-binding (A) component of a common energy-coupling factor (ECF) ABC-transporter complex. Unlike classic ABC transporters this ECF transporter provides the energy necessary to transport a number of different substrates. The sequence is that of Energy-coupling factor transporter ATP-binding protein EcfA1 from Streptococcus pyogenes serotype M28 (strain MGAS6180).